We begin with the raw amino-acid sequence, 209 residues long: Kunitz trypsin inhibitor 1 (209 aa).

The signal sequence occupies residues 1-22 (MKATISITTIFLVVALAAPSLA). Cystine bridges form between Cys63-Cys107 and Cys154-Cys162. The N-linked (GlcNAc...) asparagine glycan is linked to Asn156.

Belongs to the protease inhibitor I3 (leguminous Kunitz-type inhibitor) family.

Its function is as follows. Exhibits Kunitz trypsin protease inhibitor activity. This chain is Kunitz trypsin inhibitor 1, found in Arabidopsis thaliana (Mouse-ear cress).